We begin with the raw amino-acid sequence, 215 residues long: MLQVYLVRHGETQWNAERRIQGQSDSPLTAKGEQQAMQVATRAKELGITHIISSDLGRTRRTVEIIAQACGCDIIFDSRLRELNMGVLEKSHIDSLTEEEENWRRQLVNGTVDGRIPEGESMQELSDRVNAALESCRDLPQGSRPLLVSHGIALGCLVSTILGLPAWAERRLRLRNCSISRVDYQESLWLSSGWVVETAGDISHLDAPALDELQR.

Substrate contacts are provided by residues 8-15, 21-22, arginine 58, arginine 60, 82-85, 104-105, and 151-152; these read RHGETQWN, QG, ELNM, RR, and GI. Histidine 9 (tele-phosphohistidine intermediate) is an active-site residue. Residue glutamate 82 is the Proton donor/acceptor of the active site.

This sequence belongs to the phosphoglycerate mutase family. GpmB subfamily.

The enzyme catalyses (2R)-2-phosphoglycerate = (2R)-3-phosphoglycerate. It functions in the pathway carbohydrate degradation; glycolysis; pyruvate from D-glyceraldehyde 3-phosphate: step 3/5. The sequence is that of Probable phosphoglycerate mutase GpmB from Shigella dysenteriae serotype 1 (strain Sd197).